The primary structure comprises 119 residues: Large ribosomal subunit protein bL20 (119 aa).

This sequence belongs to the bacterial ribosomal protein bL20 family.

Functionally, binds directly to 23S ribosomal RNA and is necessary for the in vitro assembly process of the 50S ribosomal subunit. It is not involved in the protein synthesizing functions of that subunit. In Streptococcus suis (strain 98HAH33), this protein is Large ribosomal subunit protein bL20.